The following is a 481-amino-acid chain: 2-succinylbenzoate--CoA ligase (481 aa).

The protein belongs to the ATP-dependent AMP-binding enzyme family. MenE subfamily.

The catalysed reaction is 2-succinylbenzoate + ATP + CoA = 2-succinylbenzoyl-CoA + AMP + diphosphate. It functions in the pathway quinol/quinone metabolism; 1,4-dihydroxy-2-naphthoate biosynthesis; 1,4-dihydroxy-2-naphthoate from chorismate: step 5/7. It participates in quinol/quinone metabolism; menaquinone biosynthesis. Its function is as follows. Converts 2-succinylbenzoate (OSB) to 2-succinylbenzoyl-CoA (OSB-CoA). This Bacillus cytotoxicus (strain DSM 22905 / CIP 110041 / 391-98 / NVH 391-98) protein is 2-succinylbenzoate--CoA ligase.